Reading from the N-terminus, the 513-residue chain is Histone acetyltransferase KAT5 (513 aa).

Residues 8-65 enclose the Tudor-knot domain; sequence IEGCRLPVLRRNQDNEDEWPLAEILSVKDISGRKLFYVHYIDFNKRLDEWVTHERLDL. Residue Lys52 is modified to N6-acetyllysine. The segment at 69–106 is disordered; the sequence is QFPKKEAKTPTKNGLPGSRPGSPEREVPASAQASGKTL. Ser86 is subject to Phosphoserine; by GSK3. Ser90 is subject to Phosphoserine; by CDK1 and CDK9. An N6-acetyllysine; by autocatalysis mark is found at Lys104 and Lys120. A disordered region spans residues 122 to 220; that stretch reads REAIPGGEPD…RMTGSLVSDR (99 aa). The span at 133–144 shows a compositional bias: polar residues; sequence PLSSSSCLQPNH. An N6-acetyllysine; by autocatalysis mark is found at Lys148, Lys150, Lys187, and Lys189. Residue Ser199 is modified to Phosphoserine. The MYST-type HAT domain maps to 227 to 504; it reads TRMKNIECIE…IDSKCLHFTP (278 aa). The C2HC MYST-type zinc finger occupies 260 to 285; that stretch reads LYLCEFCLKYGRSLKCLQRHLTKCDL. Position 327 is an N6-acetyllysine; by autocatalysis (Lys327). Residues 368-513 are interaction with ATF2; the sequence is ACILTLPPYQ…PKDWSKRGKW (146 aa). Acetyl-CoA contacts are provided by residues 370-372 and 377-383; these read ILT and QRRGYGK. Glu403 (proton donor/acceptor) is an active-site residue. Residues Ser407 and Ser416 each contribute to the acetyl-CoA site. A Glycyl lysine isopeptide (Lys-Gly) (interchain with G-Cter in SUMO1); alternate cross-link involves residue Lys430. A Glycyl lysine isopeptide (Lys-Gly) (interchain with G-Cter in SUMO2); alternate cross-link involves residue Lys430. A Glycyl lysine isopeptide (Lys-Gly) (interchain with G-Cter in SUMO1) cross-link involves residue Lys451.

It belongs to the MYST (SAS/MOZ) family. In terms of assembly, component of the NuA4 histone acetyltransferase complex which contains the catalytic subunit KAT5/TIP60 and the subunits EP400, TRRAP/PAF400, BRD8/SMAP, EPC1, DMAP1/DNMAP1, RUVBL1/TIP49, RUVBL2, ING3, actin, ACTL6A/BAF53A, MORF4L1/MRG15, MORF4L2/MRGX, MRGBP, YEATS4/GAS41, VPS72/YL1 and MEAF6. KAT5/TIP60, EPC1, and ING3 together constitute a minimal HAT complex termed Piccolo NuA4. The NuA4 complex interacts with MYC. Interacts with ATM. Interacts with JADE1. Interacts with PLA2G4A/CPLA2, EDNRA and HDAC7. Interacts with the cytoplasmic tail of APP and APBB1/FE65. Interacts with TRIM24 and TRIM68. Forms a complex with SENP6 and UBE2I in response to UV irradiation. Identified in a complex with HINT1. Interacts with ATF2 and CUL3. Interacts with NR1D2 (via N-terminus). Component of a SWR1-like complex. Interacts with FOXP3. Interacts with ZBTB49. Interacts with SRF. Interacts with ATF3; promoting autoacetylation and deubiquitination by USP7. Interacts with EP300/p300; interaction promotes KAT5 autoacetylation. Interacts with PRKDC; interaction is impaired following KAT5 sumoylation. Interacts with GPR50. Interacts with NME3; this interaction enables recruitment of NME3 at DNA damage sites where it plays a role in the repair of DNA. As to quaternary structure, (Microbial infection) Interacts with HIV-1 TAT. Post-translationally, phosphorylated on Ser-86 and Ser-90; enhanced during G2/M phase. The phosphorylated form has a higher activity. Phosphorylation at Ser-90 by CDK1 or CDK9 is a prerequisite for phosphorylation at Ser-86 by GSK3. Phosphorylation at Ser-86 by GSK3 (GSK3A or GSK3B) activates acetyltransferase and acyltransferase activities. Phosphorylation at Ser-90 by CDK9 promotes KAT5 recruitment to chromatin. Phosphorylation by VRK1 following DNA damage promotes KAT5 association with chromatin and histone acetyltransferase activity. Autoacetylated. Autoacetylation is required for histone acetyltransferase activity. Autoacetylation at Lys-327 is facilitated by interaction with EP300/p300: it prevents ubiquitination and subsequent degradation by the proteasome and promotes acetylation of target proteins. Deacetylated by HDAC3 and SIRT1. Deacetylation by HDAC3 promotes its ubiquitination and cytoplasmic localization. In terms of processing, sumoylated by UBE2I at Lys-430 and Lys-451, leading to increase of its histone acetyltransferase activity in UV-induced DNA damage response, as well as its translocation to nuclear bodies. Sumoylation with SUMO2 by PIAS4 at Lys-430 promotes repair of DNA double-strand breaks (DSBs) via homologous recombination (HR). Sumoylation by PIAS4 impairs interaction with PRKDC, inhibiting non-homologous end joining (NHEJ)-mediated repair of DSBs, thereby facilitating HR. Desumoylated by SENP3. Post-translationally, ubiquitinated by MDM2, leading to its proteasome-dependent degradation. Ubiquitination is prevented by autoacetylation at Lys-327. Ubiquitinated following deacetylation by HDAC3, leading to cytoplasmic localization. Deubiquitinated by USP7 following interaction with ATF3, promoting its stabilization. (Microbial infection) In case of HIV-1 infection, interaction with the viral Tat protein leads to KAT5 polyubiquitination and targets it to degradation.

Its subcellular location is the nucleus. The protein localises to the chromosome. It localises to the cytoplasm. It is found in the centromere. The protein resides in the kinetochore. Its subcellular location is the cytoskeleton. The protein localises to the spindle pole. It localises to the nucleolus. It is found in the perinuclear region. The catalysed reaction is L-lysyl-[histone] + acetyl-CoA = N(6)-acetyl-L-lysyl-[histone] + CoA + H(+). The enzyme catalyses L-lysyl-[protein] + acetyl-CoA = N(6)-acetyl-L-lysyl-[protein] + CoA + H(+). It carries out the reaction (2E)-butenoyl-CoA + L-lysyl-[protein] = N(6)-(2E)-butenoyl-L-lysyl-[protein] + CoA + H(+). It catalyses the reaction 2-hydroxyisobutanoyl-CoA + L-lysyl-[protein] = N(6)-(2-hydroxyisobutanoyl)-L-lysyl-[protein] + CoA + H(+). The catalysed reaction is (S)-lactoyl-CoA + L-lysyl-[protein] = N(6)-[(S)-lactoyl]-L-lysyl-[protein] + CoA + H(+). Acyltransferase and acetyltransferase activities are activated by phosphorylation and autoacetylation. Autoacetylation activates the histone acetyltransferase activity. Its function is as follows. Catalytic subunit of the NuA4 histone acetyltransferase complex, a multiprotein complex involved in transcriptional activation of select genes principally by acetylation of nucleosomal histones H2A and H4. Histone acetylation alters nucleosome-DNA interactions and promotes interaction of the modified histones with other proteins which positively regulate transcription. The NuA4 histone acetyltransferase complex is required for the activation of transcriptional programs associated with proto-oncogene mediated growth induction, tumor suppressor mediated growth arrest and replicative senescence, apoptosis, and DNA repair. The NuA4 complex plays a direct role in repair of DNA double-strand breaks (DSBs) by promoting homologous recombination (HR): the complex inhibits TP53BP1 binding to chromatin via MBTD1, which recognizes and binds histone H4 trimethylated at 'Lys-20' (H4K20me), and KAT5 that catalyzes acetylation of 'Lys-15' of histone H2A (H2AK15ac), thereby blocking the ubiquitination mark required for TP53BP1 localization at DNA breaks. Also involved in DSB repair by mediating acetylation of 'Lys-5' of histone H2AX (H2AXK5ac), promoting NBN/NBS1 assembly at the sites of DNA damage. The NuA4 complex plays a key role in hematopoietic stem cell maintenance and is required to maintain acetylated H2A.Z/H2AZ1 at MYC target genes. The NuA4 complex is also required for spermatid development by promoting acetylation of histones: histone hyperacetylation is required for histone replacement during the transition from round to elongating spermatids. Component of a SWR1-like complex that specifically mediates the removal of histone H2A.Z/H2AZ1 from the nucleosome. Also acetylates non-histone proteins, such as BMAL1, ATM, AURKB, CHKA, CGAS, ERCC4/XPF, LPIN1, TP53/p53, NDC80/HEC1, NR1D2, RAN, SOX4, FOXP3, SQSTM1, ULK1 and RUBCNL/Pacer. Directly acetylates and activates ATM. Promotes nucleotide excision repair (NER) by mediating acetylation of ERCC4/XPF, thereby promoting formation of the ERCC4-ERCC1 complex. Relieves NR1D2-mediated inhibition of APOC3 expression by acetylating NR1D2. Acts as a regulator of regulatory T-cells (Treg) by catalyzing FOXP3 acetylation, thereby promoting FOXP3 transcriptional repressor activity. Involved in skeletal myoblast differentiation by mediating acetylation of SOX4. Catalyzes acetylation of APBB1/FE65, increasing its transcription activator activity. Promotes transcription elongation during the activation phase of the circadian cycle by catalyzing acetylation of BMAL1, promoting elongation of circadian transcripts. Together with GSK3 (GSK3A or GSK3B), acts as a regulator of autophagy: phosphorylated at Ser-86 by GSK3 under starvation conditions, leading to activate acetyltransferase activity and promote acetylation of key autophagy regulators, such as ULK1 and RUBCNL/Pacer. Acts as a regulator of the cGAS-STING innate antiviral response by catalyzing acetylation the N-terminus of CGAS, thereby promoting CGAS DNA-binding and activation. Also regulates lipid metabolism by mediating acetylation of CHKA or LPIN1. Promotes lipolysis of lipid droplets following glucose deprivation by mediating acetylation of isoform 1 of CHKA, thereby promoting monomerization of CHKA and its conversion into a tyrosine-protein kinase. Acts as a regulator of fatty-acid-induced triacylglycerol synthesis by catalyzing acetylation of LPIN1, thereby promoting the synthesis of diacylglycerol. In addition to protein acetyltransferase, can use different acyl-CoA substrates, such as (2E)-butenoyl-CoA (crotonyl-CoA), S-lactoyl-CoA (lactyl-CoA) and 2-hydroxyisobutanoyl-CoA (2-hydroxyisobutyryl-CoA), and is able to mediate protein crotonylation, lactylation and 2-hydroxyisobutyrylation, respectively. Acts as a key regulator of chromosome segregation and kinetochore-microtubule attachment during mitosis by mediating acetylation or crotonylation of target proteins. Catalyzes acetylation of AURKB at kinetochores, increasing AURKB activity and promoting accurate chromosome segregation in mitosis. Acetylates RAN during mitosis, promoting microtubule assembly at mitotic chromosomes. Acetylates NDC80/HEC1 during mitosis, promoting robust kinetochore-microtubule attachment. Catalyzes crotonylation of MAPRE1/EB1, thereby ensuring accurate spindle positioning in mitosis. Catalyzes lactylation of NBN/NBS1 in response to DNA damage, thereby promoting DNA double-strand breaks (DSBs) via homologous recombination (HR). In terms of biological role, (Microbial infection) Catalyzes the acetylation of flavivirus NS3 protein to modulate their RNA-binding and -unwinding activities leading to facilitate viral replication. This is Histone acetyltransferase KAT5 from Homo sapiens (Human).